Here is a 282-residue protein sequence, read N- to C-terminus: uncharacterized protein (282 aa).

This is an uncharacterized protein from Mycoplasma pneumoniae (strain ATCC 29342 / M129 / Subtype 1) (Mycoplasmoides pneumoniae).